A 131-amino-acid chain; its full sequence is Peptidyl-prolyl cis-trans isomerase NIMA-interacting 4 (131 aa).

The tract at residues 1 to 25 (MPPKGKSGSGKGGKGGAASGSDSAD) is necessary for nuclear localization and DNA-binding. Residues 1–39 (MPPKGKSGSGKGGKGGAASGSDSADKKSQGPKGGGNAVK) form a disordered region. Residues 1-41 (MPPKGKSGSGKGGKGGAASGSDSADKKSQGPKGGGNAVKVR) are necessary for association with the pre-rRNP complexes. Gly residues predominate over residues 7–18 (SGSGKGGKGGAA). The residue at position 19 (Ser19) is a Phosphoserine; by CK2. Positions 35–129 (GNAVKVRHIL…FGYHIIMVEG (95 aa)) constitute a PpiC domain.

This sequence belongs to the PpiC/parvulin rotamase family. PIN4 subfamily. In terms of assembly, found in pre-ribosomal ribonucleoprotein (pre-rRNP) complexes. Phosphorylated. Phosphorylation occurs both in the nucleus and the cytoplasm. Phosphorylation at Ser-19 does not affect its PPIase activity but is required for nuclear localization, and the dephosphorylation is a prerequisite for the binding to DNA. The unphosphorylated form associates with the pre-rRNP complexes in the nucleus.

The protein resides in the nucleus. The protein localises to the nucleolus. It is found in the cytoplasm. Its subcellular location is the cytoskeleton. It localises to the spindle. The catalysed reaction is [protein]-peptidylproline (omega=180) = [protein]-peptidylproline (omega=0). In terms of biological role, involved as a ribosomal RNA processing factor in ribosome biogenesis. Binds to tightly bent AT-rich stretches of double-stranded DNA. The polypeptide is Peptidyl-prolyl cis-trans isomerase NIMA-interacting 4 (Pin4) (Mus musculus (Mouse)).